A 286-amino-acid chain; its full sequence is Interferon-induced 35 kDa protein homolog (286 aa).

Positions 5–26 (LQTVLYSLQEEQARLKMRLQEL) are leucine-zipper. NID domains are found at residues 81 to 170 (ALVT…GDVE) and 183 to 266 (FADE…GEVE).

The protein belongs to the NMI family. As to quaternary structure, homodimer. Also interacts with B-ATF. Interacts with TRIM21. Interacts (via NID domains) with NMI (via NID domains); the interaction is direct and is facilitated by TRIM21. In terms of processing, phosphorylated. Dephosphorylation correlates with the formation of a complex with NMI.

It localises to the cytoplasm. The protein localises to the nucleus. It is found in the secreted. Its function is as follows. Acts as a signaling pathway regulator involved in innate immune system response. In response to interferon IFN-alpha, associates in a complex with transcriptional regulator NMI to regulate immune response; the complex formation prevents proteasome-mediated degradation of IFI35 and correlates with IFI35 dephosphorylation. In complex with NMI, inhibits virus-triggered type I interferon/IFN-beta production. In complex with NMI, negatively regulates nuclear factor NF-kappa-B signaling by inhibiting the nuclear translocation, activation and transcription of the NF-kappa-B subunit p65/RELA, resulting in the inhibition of endothelial cell proliferation, migration and re-endothelialization of injured arteries. Beside its role as an intracellular signaling pathway regulator, also functions extracellularly as damage-associated molecular patterns (DAMPs) to promote inflammation when actively released by macrophage to the extracellular space during cell injury and pathogen invasion. Macrophage-secreted IFI35 activates NF-kappa-B signaling in adjacent macrophages through Toll-like receptor 4/TLR4 activation, thereby inducing NF-kappa-B translocation from the cytoplasm into the nucleus which promotes the release of pro-inflammatory cytokines. The protein is Interferon-induced 35 kDa protein homolog of Mus musculus (Mouse).